A 219-amino-acid chain; its full sequence is Interleukin-12 subunit alpha (219 aa).

A signal peptide spans methionine 1–alanine 22. N-linked (GlcNAc...) asparagine glycosylation is found at asparagine 24, asparagine 93, and asparagine 107. Disulfide bonds link cysteine 37-cysteine 110, cysteine 64-cysteine 196, and cysteine 85-cysteine 123.

This sequence belongs to the IL-6 superfamily. Heterodimer with IL12B; disulfide-linked. This heterodimer is known as interleukin IL-12. Heterodimer with EBI3/IL27B; not disulfide-linked. This heterodimer is known as interleukin IL-35. Interacts with NBR1; this interaction promotes IL-12 secretion.

It localises to the secreted. Its function is as follows. Heterodimerizes with IL12B to form the IL-12 cytokine or with EBI3/IL27B to form the IL-35 cytokine. IL-12 is primarily produced by professional antigen-presenting cells (APCs) such as B-cells and dendritic cells (DCs) as well as macrophages and granulocytes and regulates T-cell and natural killer-cell responses, induces the production of interferon-gamma (IFN-gamma), favors the differentiation of T-helper 1 (Th1) cells and is an important link between innate resistance and adaptive immunity. Mechanistically, exerts its biological effects through a receptor composed of IL12R1 and IL12R2 subunits. Binding to the receptor results in the rapid tyrosine phosphorylation of a number of cellular substrates including the JAK family kinases TYK2 and JAK2. In turn, recruited STAT4 gets phosphorylated and translocates to the nucleus where it regulates cytokine/growth factor responsive genes. As part of IL-35, plays essential roles in maintaining the immune homeostasis of the liver microenvironment and also functions as an immune-suppressive cytokine. Mediates biological events through unconventional receptors composed of IL12RB2 and gp130/IL6ST heterodimers or homodimers. Signaling requires the transcription factors STAT1 and STAT4, which form a unique heterodimer that binds to distinct DNA sites. The sequence is that of Interleukin-12 subunit alpha (IL12A) from Cercocebus atys (Sooty mangabey).